Here is a 205-residue protein sequence, read N- to C-terminus: Probable thymidylate kinase (205 aa).

An ATP-binding site is contributed by 10–17 (GIDGSGKT).

The protein belongs to the thymidylate kinase family.

The enzyme catalyses dTMP + ATP = dTDP + ADP. In Pyrococcus horikoshii (strain ATCC 700860 / DSM 12428 / JCM 9974 / NBRC 100139 / OT-3), this protein is Probable thymidylate kinase (tmk).